We begin with the raw amino-acid sequence, 501 residues long: ATP synthase subunit alpha (501 aa).

169-176 (GDRQTGKT) contributes to the ATP binding site.

The protein belongs to the ATPase alpha/beta chains family. In terms of assembly, F-type ATPases have 2 components, CF(1) - the catalytic core - and CF(0) - the membrane proton channel. CF(1) has five subunits: alpha(3), beta(3), gamma(1), delta(1), epsilon(1). CF(0) has three main subunits: a(1), b(2) and c(9-12). The alpha and beta chains form an alternating ring which encloses part of the gamma chain. CF(1) is attached to CF(0) by a central stalk formed by the gamma and epsilon chains, while a peripheral stalk is formed by the delta and b chains.

It localises to the cell membrane. It catalyses the reaction ATP + H2O + 4 H(+)(in) = ADP + phosphate + 5 H(+)(out). Produces ATP from ADP in the presence of a proton gradient across the membrane. The alpha chain is a regulatory subunit. In Streptococcus pneumoniae (strain Hungary19A-6), this protein is ATP synthase subunit alpha.